The primary structure comprises 165 residues: Nucleotide-binding protein Syncc9605_0652 (165 aa).

The protein belongs to the YajQ family.

Its function is as follows. Nucleotide-binding protein. This chain is Nucleotide-binding protein Syncc9605_0652, found in Synechococcus sp. (strain CC9605).